The following is a 440-amino-acid chain: Serine/threonine-protein kinase toxin HipA (440 aa).

Ser150 is modified (phosphoserine; by autocatalysis). Residues Ala152–Lys157, Lys181, and Glu234–Phe236 each bind ATP. The active-site Proton acceptor is the Asp309. ATP is bound by residues His311–Asn314 and Tyr331–Asp332. The DNA-binding element occupies Lys379 to Arg382.

Belongs to the HipA Ser/Thr kinase family. As to quaternary structure, forms a HipA(2)HipB(2) heterotetramer which can interact with a single operator on DNA. When 2 operators are present each HipB dimer contacts 1 HipA molecule, which are brought together by the DNA bend and dimerize, blocking the HipA active site and inactivating its toxic activity. Mutations present in allele hipA7 (G22S and D291A) decrease the affinity of HipA for HipB. In terms of processing, autophosphorylates intermolecularly on Ser-150; phosphorylated form not seen to bind ATP and no longer has kinase activity.

It catalyses the reaction L-seryl-[protein] + ATP = O-phospho-L-seryl-[protein] + ADP + H(+). It carries out the reaction L-threonyl-[protein] + ATP = O-phospho-L-threonyl-[protein] + ADP + H(+). With respect to regulation, once phosphorylated no longer has kinase activity. In terms of biological role, toxic component of a type II toxin-antitoxin (TA) system, first identified by mutations that increase production of persister cells, a fraction of cells that are phenotypic variants not killed by antibiotics, which lead to multidrug tolerance. Persistence may be ultimately due to global remodeling of the persister cell's ribosomes. Phosphorylates Glu-tRNA-ligase (AC P04805, gltX, on 'Ser-239') in vivo. Phosphorylation of GltX prevents it from being charged, leading to an increase in uncharged tRNA(Glu). This induces amino acid starvation and the stringent response via RelA/SpoT and increased (p)ppGpp levels, which inhibits replication, transcription, translation and cell wall synthesis, reducing growth and leading to persistence and multidrug resistance. Once the level of HipA exceeds a threshold cells become dormant, and the length of dormancy is determined by how much HipA levels exceed the threshold. The hipA7 mutation (a double G22S D291A mutation) leads to increased generation of persister cells (cells that survive antibiotic treatment) probably by entering into a dormant state, as well as cold-sensitivity. Wild-type cells produce persisters at a frequency of 10(-6) to 10(-5) whereas hipA7 cells produce about 100-fold more persisters. hipA7 decreases the affinity for antitoxin HipB, leading to increased HipA levels and persistence; depending on the protein level, can be toxic enough to reduce cell growth or even kill cells. Generation of persister cells requires (p)ppGpp as cells lacking relA or relA/spoT generate fewer or no persister cells respectively compared to hipA7. The toxic effect of HipA is neutralized by its cognate antitoxin HipB. Also neutralized by overexpression of gltX. With HipB acts as a corepressor for transcription of the hipBA promoter; binding of HipA-HipB to DNA induces a 70 degree bend. This brings together and dimerizes 2 HipA molecules, which distorts the promoter region, preventing sigma-factor binding; additionally HipA and HipB would physically prevent RNA core polymerase from contacting the -35 promoter box. May play a role in biofilm formation. The sequence is that of Serine/threonine-protein kinase toxin HipA (hipA) from Escherichia coli (strain K12).